We begin with the raw amino-acid sequence, 846 residues long: Translation initiation factor IF-2 (846 aa).

The 168-residue stretch at 345-512 (SRAPVVTIMG…AVLLQSEVLE (168 aa)) folds into the tr-type G domain. Residues 354 to 361 (GHVDHGKT) form a G1 region. Residue 354–361 (GHVDHGKT) coordinates GTP. The G2 stretch occupies residues 379–383 (GITQH). The segment at 400–403 (DTPG) is G3. GTP contacts are provided by residues 400 to 404 (DTPGH) and 454 to 457 (NKID). The tract at residues 454–457 (NKID) is G4. The interval 490–492 (SAK) is G5.

It belongs to the TRAFAC class translation factor GTPase superfamily. Classic translation factor GTPase family. IF-2 subfamily.

The protein resides in the cytoplasm. One of the essential components for the initiation of protein synthesis. Protects formylmethionyl-tRNA from spontaneous hydrolysis and promotes its binding to the 30S ribosomal subunits. Also involved in the hydrolysis of GTP during the formation of the 70S ribosomal complex. The protein is Translation initiation factor IF-2 of Francisella tularensis subsp. holarctica (strain FTNF002-00 / FTA).